The chain runs to 207 residues: Succinyl-CoA:3-ketoacid coenzyme A transferase subunit B (207 aa).

The active site involves E43.

It belongs to the 3-oxoacid CoA-transferase subunit B family. In terms of assembly, heterodimer of a subunit A and a subunit B.

The catalysed reaction is a 3-oxo acid + succinyl-CoA = a 3-oxoacyl-CoA + succinate. In Helicobacter pylori (strain J99 / ATCC 700824) (Campylobacter pylori J99), this protein is Succinyl-CoA:3-ketoacid coenzyme A transferase subunit B (scoB).